Consider the following 170-residue polypeptide: Sec-independent protein translocase protein TATA, chloroplastic (170 aa).

A chloroplast-targeting transit peptide spans 1-61 (MGIPVVVPVA…GGSGGDLAAV (61 aa)). The Lumenal portion of the chain corresponds to 62-84 (AASVAARPRRAGSGGGGALGCKC). The helical transmembrane segment at 85–105 (LFGLGVPELAVIAGVAALVFG) threads the bilayer. At 106-170 (PKQLPEIGRS…LEASSSKESA (65 aa)) the chain is on the stromal side. The span at 130 to 139 (FETELKKEPG) shows a compositional bias: basic and acidic residues. Residues 130-170 (FETELKKEPGEGGDQPPPATPTAVSGGEEKGLEASSSKESA) are disordered.

This sequence belongs to the TatA/E family. In thylakoid membranes, TATC and TATB form a large receptor complex, containing about eight TATC-TATB pairs, which binds the precursor protein. Twin arginine signal peptide promotes pH-triggered docking of TATA oligomers to TATC-TATB receptor complex, inducing a conformational switch of TATA that results in activation of the translocase. TATA dissociates from TATC-TATB upon completion of translocation.

Its subcellular location is the plastid. The protein resides in the chloroplast thylakoid membrane. Functionally, part of the twin-arginine translocation (Tat) system that transports large folded proteins containing a characteristic twin-arginine motif in their signal peptide across the thylakoid membrane. Involved in delta pH-dependent protein transport required for chloroplast development, especially thylakoid membrane formation. TATC and TATB mediate precursor recognition, whereas TATA facilitates translocation. This Zea mays (Maize) protein is Sec-independent protein translocase protein TATA, chloroplastic.